The following is a 160-amino-acid chain: F-box protein At1g15015 (160 aa).

The 44-residue stretch at 1–44 (MDVTLPHHVVEDILERLPVKTLRKFKCVCSTWRSTIDSQRFKDR) folds into the F-box domain.

This Arabidopsis thaliana (Mouse-ear cress) protein is F-box protein At1g15015.